The primary structure comprises 276 residues: Large ribosomal subunit protein uL2 (276 aa).

Residues 224 to 276 (AMNPVDHPLGGGEGKSSGGRHPVTPWGKPTKGYKTRNKKKPSSKLIVKRRGQK) are disordered. The segment covering 254–276 (KGYKTRNKKKPSSKLIVKRRGQK) has biased composition (basic residues).

The protein belongs to the universal ribosomal protein uL2 family. Part of the 50S ribosomal subunit. Forms a bridge to the 30S subunit in the 70S ribosome.

Its function is as follows. One of the primary rRNA binding proteins. Required for association of the 30S and 50S subunits to form the 70S ribosome, for tRNA binding and peptide bond formation. It has been suggested to have peptidyltransferase activity; this is somewhat controversial. Makes several contacts with the 16S rRNA in the 70S ribosome. The sequence is that of Large ribosomal subunit protein uL2 from Solidesulfovibrio magneticus (strain ATCC 700980 / DSM 13731 / RS-1) (Desulfovibrio magneticus).